The primary structure comprises 388 residues: Pyruvate dehydrogenase E1 component subunit alpha, testis-specific form, mitochondrial (388 aa).

The N-terminal 27 residues, 1 to 27, are a transit peptide targeting the mitochondrion; sequence MLAAFISRVLRRVAQKSARRVLVASRN. His-90, Tyr-116, Arg-117, Gly-163, Val-165, Asp-194, Gly-195, Ala-196, Asn-223, and Tyr-225 together coordinate pyruvate. Thiamine diphosphate contacts are provided by Tyr-116, Arg-117, Gly-163, Val-165, Asp-194, Gly-195, Ala-196, and Asn-223. Residue Asp-194 participates in Mg(2+) binding. Mg(2+)-binding residues include Asn-223 and Tyr-225. His-290 is a binding site for thiamine diphosphate. At Ser-291 the chain carries Phosphoserine; by PDK1, PDK2, PDK3 and PDK4. Ser-293 carries the phosphoserine modification. Ser-298 carries the phosphoserine; by PDK3 modification.

Heterotetramer of two PDHA2 and two PDHB subunits. The heterotetramer interacts with DLAT, and is part of the multimeric pyruvate dehydrogenase complex that contains multiple copies of pyruvate dehydrogenase (E1), dihydrolipoamide acetyltransferase (DLAT, E2) and lipoamide dehydrogenase (DLD, E3). These subunits are bound to an inner core composed of about 48 DLAT and 12 PDHX molecules. Thiamine diphosphate is required as a cofactor. It depends on Mg(2+) as a cofactor. Post-translationally, phosphorylation at Ser-291, Ser-293 and Ser-298 by PDK family kinases inactivates the enzyme; for this phosphorylation at a single site is sufficient. Phosphorylation at Ser-293 interferes with access to active site, and thereby inactivates the enzyme. Dephosphorylation at all three sites, i.e. at Ser-291, Ser-293 and Ser-298, is required for reactivation. In terms of tissue distribution, testis. Expressed in postmeiotic spermatogenic cells.

Its subcellular location is the mitochondrion matrix. It catalyses the reaction N(6)-[(R)-lipoyl]-L-lysyl-[protein] + pyruvate + H(+) = N(6)-[(R)-S(8)-acetyldihydrolipoyl]-L-lysyl-[protein] + CO2. Its activity is regulated as follows. Pyruvate dehydrogenase activity is inhibited by phosphorylation of PDHA2; it is reactivated by dephosphorylation. In terms of biological role, the pyruvate dehydrogenase complex catalyzes the overall conversion of pyruvate to acetyl-CoA and CO(2), and thereby links the glycolytic pathway to the tricarboxylic cycle. The protein is Pyruvate dehydrogenase E1 component subunit alpha, testis-specific form, mitochondrial (PDHA2) of Homo sapiens (Human).